Reading from the N-terminus, the 372-residue chain is Heat-inducible transcription repressor HrcA (372 aa).

A disordered region spans residues 296 to 331 (VSSGYGRSGEAGEPAGNDPVGEPETESETESQTNDM).

Belongs to the HrcA family.

Functionally, negative regulator of class I heat shock genes (grpE-dnaK-dnaJ and groELS operons). Prevents heat-shock induction of these operons. The chain is Heat-inducible transcription repressor HrcA from Bifidobacterium longum subsp. infantis (strain ATCC 15697 / DSM 20088 / JCM 1222 / NCTC 11817 / S12).